The sequence spans 437 residues: Proline--tRNA ligase (437 aa).

Belongs to the class-II aminoacyl-tRNA synthetase family. ProS type 2 subfamily. As to quaternary structure, homodimer.

The protein localises to the cytoplasm. The catalysed reaction is tRNA(Pro) + L-proline + ATP = L-prolyl-tRNA(Pro) + AMP + diphosphate. Catalyzes the attachment of proline to tRNA(Pro) in a two-step reaction: proline is first activated by ATP to form Pro-AMP and then transferred to the acceptor end of tRNA(Pro). This Acidiphilium cryptum (strain JF-5) protein is Proline--tRNA ligase.